Consider the following 86-residue polypeptide: UPF0297 protein LSL_1110 (86 aa).

Belongs to the UPF0297 family.

This is UPF0297 protein LSL_1110 from Ligilactobacillus salivarius (strain UCC118) (Lactobacillus salivarius).